Consider the following 147-residue polypeptide: MAGDSSLLAAVSLLSACQQSYFAWRVGRARLKHKIAPPAVTGPLEFERIFRAQQNSLEFYPVFIVMLWMAGWYFNQVFAACLGLLYIYARHKYFWGYAEAAEKRITGFRLSLGILTLLPVLAVLGVASRFLNEYLDFHVAKKLRKPF.

3 helical membrane-spanning segments follow: residues 6-26 (SLLA…AWRV), 62-82 (VFIV…AACL), and 107-127 (GFRL…LGVA).

As to quaternary structure, homotrimer.

The protein localises to the endoplasmic reticulum membrane. It localises to the microsome membrane. It carries out the reaction RX + glutathione = an S-substituted glutathione + a halide anion + H(+). It catalyses the reaction 1-chloro-2,4-dinitrobenzene + glutathione = 2,4-dinitrophenyl-S-glutathione + chloride + H(+). The catalysed reaction is leukotriene C4 = leukotriene A4 + glutathione. The enzyme catalyses (5S)-hydroperoxy-(6E,8Z,11Z,14Z)-eicosatetraenoate + 2 glutathione = (5S)-hydroxy-(6E,8Z,11Z,14Z)-eicosatetraenoate + glutathione disulfide + H2O. Its activity is regulated as follows. Each monomer binds on GSH molecule but only one subunit is catalytically active. Its function is as follows. Catalyzes several different glutathione-dependent reactions. Catalyzes the glutathione-dependent reduction of lipid hydroperoxides, such as 5-HPETE. Has glutathione transferase activity, toward xenobiotic electrophiles, such as 1-chloro-2, 4-dinitrobenzene (CDNB). Also catalyzes the conjugation of leukotriene A4 with reduced glutathione to form leukotriene C4 (LTC4). Involved in oxidative DNA damage induced by ER stress and anticancer agents by activating LTC4 biosynthetic machinery in nonimmune cells. This is Microsomal glutathione S-transferase 2 from Mus musculus (Mouse).